The primary structure comprises 202 residues: GTP cyclohydrolase-2 (202 aa).

49-53 provides a ligand contact to GTP; that stretch reads RIHSE. The Zn(2+) site is built by Cys-54, Cys-65, and Cys-67. Residues Gln-70, 92-94, and Thr-114 contribute to the GTP site; that span reads EGR. The Proton acceptor role is filled by Asp-126. Catalysis depends on Arg-128, which acts as the Nucleophile. Residues Thr-149 and Lys-154 each coordinate GTP.

It belongs to the GTP cyclohydrolase II family. The cofactor is Zn(2+).

It catalyses the reaction GTP + 4 H2O = 2,5-diamino-6-hydroxy-4-(5-phosphoribosylamino)-pyrimidine + formate + 2 phosphate + 3 H(+). The protein operates within cofactor biosynthesis; riboflavin biosynthesis; 5-amino-6-(D-ribitylamino)uracil from GTP: step 1/4. Functionally, catalyzes the conversion of GTP to 2,5-diamino-6-ribosylamino-4(3H)-pyrimidinone 5'-phosphate (DARP), formate and pyrophosphate. The protein is GTP cyclohydrolase-2 of Shewanella frigidimarina (strain NCIMB 400).